Here is a 767-residue protein sequence, read N- to C-terminus: Photosystem I P700 chlorophyll a apoprotein A1 (767 aa).

The next 8 membrane-spanning stretches (helical) occupy residues 72–95 (IFSAHFGHLAVIFIWLSGAFFHGA), 158–181 (LMALAIGALVMAGLMLNAGVFHYH), 197–221 (LNHHLAGLLGLGSLSWAGHLIHVSA), 305–323 (IAHHHVAIAVLFIVAGHMY), 364–387 (WHAQLGLNLAMLGSLSIIVAQHMY), 403–429 (IGLFTHHMWIGGFLIVGGAAHAAIAMV), 451–473 (AIISHLNWVCIWLGAHSFGLYIH), and 548–566 (FMVHHIHAFTIHVTVLILL). Residues Cys-590 and Cys-599 each contribute to the [4Fe-4S] cluster site. A run of 2 helical transmembrane segments spans residues 606–627 (HVFLGLFWMYNSLSIVIFHFSW) and 681–703 (TSAYGIMFLGAHFIWAFSLMFLF). Chlorophyll a' is bound at residue His-692. Met-700 and Tyr-708 together coordinate chlorophyll a. Trp-709 lines the phylloquinone pocket. A helical transmembrane segment spans residues 741–761 (AVGVAHYLLGGIATTWAFFHA).

This sequence belongs to the PsaA/PsaB family. The PsaA/B heterodimer binds the P700 chlorophyll special pair and subsequent electron acceptors. PSI consists of a core antenna complex that captures photons, and an electron transfer chain that converts photonic excitation into a charge separation. The cyanobacterial PSI reaction center is composed of one copy each of PsaA,B,C,D,E,F,I,J,K,L,M and X, and forms trimeric complexes. PSI electron transfer chain: 5 chlorophyll a, 1 chlorophyll a', 2 phylloquinones and 3 4Fe-4S clusters. PSI core antenna: 90 chlorophyll a, 22 carotenoids, 3 phospholipids and 1 galactolipid. P700 is a chlorophyll a/chlorophyll a' dimer, A0 is one or more chlorophyll a, A1 is one or both phylloquinones and FX is a shared 4Fe-4S iron-sulfur center. is required as a cofactor.

It localises to the cellular thylakoid membrane. The catalysed reaction is reduced [plastocyanin] + hnu + oxidized [2Fe-2S]-[ferredoxin] = oxidized [plastocyanin] + reduced [2Fe-2S]-[ferredoxin]. Its function is as follows. PsaA and PsaB bind P700, the primary electron donor of photosystem I (PSI), as well as the electron acceptors A0, A1 and FX. PSI is a plastocyanin/cytochrome c6-ferredoxin oxidoreductase, converting photonic excitation into a charge separation, which transfers an electron from the donor P700 chlorophyll pair to the spectroscopically characterized acceptors A0, A1, FX, FA and FB in turn. Oxidized P700 is reduced on the lumenal side of the thylakoid membrane by plastocyanin or cytochrome c6. This is Photosystem I P700 chlorophyll a apoprotein A1 from Parasynechococcus marenigrum (strain WH8102).